Here is a 264-residue protein sequence, read N- to C-terminus: Thymidylate synthase (264 aa).

Arginine 21 lines the dUMP pocket. Histidine 51 is a binding site for (6R)-5,10-methylene-5,6,7,8-tetrahydrofolate. DUMP is bound at residue arginine 126–arginine 127. Cysteine 146 acts as the Nucleophile in catalysis. DUMP is bound by residues arginine 166–aspartate 169, asparagine 177, and histidine 207–tyrosine 209. Residue aspartate 169 coordinates (6R)-5,10-methylene-5,6,7,8-tetrahydrofolate. Alanine 263 contributes to the (6R)-5,10-methylene-5,6,7,8-tetrahydrofolate binding site.

Belongs to the thymidylate synthase family. Bacterial-type ThyA subfamily. In terms of assembly, homodimer.

It localises to the cytoplasm. It catalyses the reaction dUMP + (6R)-5,10-methylene-5,6,7,8-tetrahydrofolate = 7,8-dihydrofolate + dTMP. Its pathway is pyrimidine metabolism; dTTP biosynthesis. In terms of biological role, catalyzes the reductive methylation of 2'-deoxyuridine-5'-monophosphate (dUMP) to 2'-deoxythymidine-5'-monophosphate (dTMP) while utilizing 5,10-methylenetetrahydrofolate (mTHF) as the methyl donor and reductant in the reaction, yielding dihydrofolate (DHF) as a by-product. This enzymatic reaction provides an intracellular de novo source of dTMP, an essential precursor for DNA biosynthesis. The chain is Thymidylate synthase from Photorhabdus laumondii subsp. laumondii (strain DSM 15139 / CIP 105565 / TT01) (Photorhabdus luminescens subsp. laumondii).